The sequence spans 162 residues: EF-hand calcium-binding domain-containing protein 11 (162 aa).

EF-hand domains are found at residues 18-53, 91-126, and 127-162; these read SERR…LFGY, LYRN…VAPK, and LPSR…GKAK. Ca(2+) contacts are provided by Asp-140, Asp-142, Asp-144, His-146, and Asp-151.

The polypeptide is EF-hand calcium-binding domain-containing protein 11 (Efcab11) (Rattus norvegicus (Rat)).